The following is a 212-amino-acid chain: Interleukin-6 (212 aa).

The first 27 residues, 1 to 27 (MNSFSTSAFGPVAFSLGLLLVLPAAFP), serve as a signal peptide directing secretion. A disulfide bond links C72 and C78. N73 is a glycosylation site (N-linked (GlcNAc...) asparagine). Residue S81 is modified to Phosphoserine. A disulfide bridge connects residues C101 and C111. N172 is a glycosylation site (N-linked (GlcNAc...) asparagine).

Belongs to the IL-6 superfamily. As to quaternary structure, component of a hexamer of two molecules each of IL6, IL6R and IL6ST; first binds to IL6R to associate with the signaling subunit IL6ST. Interacts with IL6R (via the N-terminal ectodomain); this interaction may be affected by IL6R-binding with SORL1, hence decreasing IL6 cis signaling. Interacts with SORL1 (via the N-terminal ectodomain); this interaction leads to IL6 internalization and lysosomal degradation. May form a trimeric complex with the soluble SORL1 ectodomain and soluble IL6R receptor; this interaction might stabilize circulating IL6, hence promoting IL6 trans signaling.

It localises to the secreted. Its function is as follows. Cytokine with a wide variety of biological functions in immunity, tissue regeneration, and metabolism. Binds to IL6R, then the complex associates to the signaling subunit IL6ST/gp130 to trigger the intracellular IL6-signaling pathway. The interaction with the membrane-bound IL6R and IL6ST stimulates 'classic signaling', whereas the binding of IL6 and soluble IL6R to IL6ST stimulates 'trans-signaling'. Alternatively, 'cluster signaling' occurs when membrane-bound IL6:IL6R complexes on transmitter cells activate IL6ST receptors on neighboring receiver cells. Functionally, IL6 is a potent inducer of the acute phase response. Rapid production of IL6 contributes to host defense during infection and tissue injury, but excessive IL6 synthesis is involved in disease pathology. In the innate immune response, is synthesized by myeloid cells, such as macrophages and dendritic cells, upon recognition of pathogens through toll-like receptors (TLRs) at the site of infection or tissue injury. In the adaptive immune response, is required for the differentiation of B cells into immunoglobulin-secreting cells. Plays a major role in the differentiation of CD4(+) T cell subsets. Essential factor for the development of T follicular helper (Tfh) cells that are required for the induction of germinal-center formation. Required to drive naive CD4(+) T cells to the Th17 lineage. Also required for proliferation of myeloma cells and the survival of plasmablast cells. Acts as an essential factor in bone homeostasis and on vessels directly or indirectly by induction of VEGF, resulting in increased angiogenesis activity and vascular permeability. Induces, through 'trans-signaling' and synergistically with IL1B and TNF, the production of VEGF. Involved in metabolic controls, is discharged into the bloodstream after muscle contraction increasing lipolysis and improving insulin resistance. 'Trans-signaling' in central nervous system also regulates energy and glucose homeostasis. Mediates, through GLP-1, crosstalk between insulin-sensitive tissues, intestinal L cells and pancreatic islets to adapt to changes in insulin demand. Also acts as a myokine. Plays a protective role during liver injury, being required for maintenance of tissue regeneration. Also has a pivotal role in iron metabolism by regulating HAMP/hepcidin expression upon inflammation or bacterial infection. Through activation of IL6ST-YAP-NOTCH pathway, induces inflammation-induced epithelial regeneration. This is Interleukin-6 (IL6) from Macaca mulatta (Rhesus macaque).